We begin with the raw amino-acid sequence, 135 residues long: Galectin-1 (135 aa).

Position 2 is an N-acetylalanine (alanine 2). The 132-residue stretch at 4–135 (GLVASNLNLK…DFKIKCVAFE (132 aa)) folds into the Galectin domain. An N6-acetyllysine mark is found at lysine 13, lysine 19, and lysine 29. Serine 30 is modified (phosphoserine). A beta-D-galactoside is bound by residues 45–49 (HFNPR), histidine 53, asparagine 62, and 69–72 (WGAE). Lysine 128 is modified (N6-acetyllysine).

In terms of assembly, homodimer. Binds LGALS3BP. Interacts with CD2, CD3, CD4, CD6, CD7, CD43, ALCAM and CD45. Interacts with laminin (via poly-N-acetyllactosamine). Interacts with SUSD2. Interacts with cargo receptor TMED10; the interaction mediates the translocation from the cytoplasm into the ERGIC (endoplasmic reticulum-Golgi intermediate compartment) and thereby secretion.

The protein localises to the secreted. It is found in the extracellular space. It localises to the extracellular matrix. Its subcellular location is the cytoplasm. Lectin that binds beta-galactoside and a wide array of complex carbohydrates. Plays a role in regulating apoptosis, cell proliferation and cell differentiation. Inhibits CD45 protein phosphatase activity and therefore the dephosphorylation of Lyn kinase. Strong inducer of T-cell apoptosis. The sequence is that of Galectin-1 (LGALS1) from Sus scrofa (Pig).